Consider the following 417-residue polypeptide: Squalene synthase (417 aa).

NADP(+) is bound by residues arginine 52 and arginine 77. The Mg(2+) site is built by aspartate 80, glutamate 83, and aspartate 84. Arginine 218 contacts NADP(+). The chain crosses the membrane as a helical span at residues serine 284–tyrosine 304. Residues lysine 315 and arginine 317 each contribute to the NADP(+) site. The helical transmembrane segment at proline 384 to leucine 404 threads the bilayer.

It belongs to the phytoene/squalene synthase family. It depends on Mg(2+) as a cofactor. As to expression, widely expressed.

The protein localises to the endoplasmic reticulum membrane. It catalyses the reaction 2 (2E,6E)-farnesyl diphosphate + NADPH + H(+) = squalene + 2 diphosphate + NADP(+). The enzyme catalyses 2 (2E,6E)-farnesyl diphosphate + NADH + H(+) = squalene + 2 diphosphate + NAD(+). It carries out the reaction 2 (2E,6E)-farnesyl diphosphate = presqualene diphosphate + diphosphate. The catalysed reaction is presqualene diphosphate + NADH + H(+) = squalene + diphosphate + NAD(+). It catalyses the reaction presqualene diphosphate + NADPH + H(+) = squalene + diphosphate + NADP(+). It participates in terpene metabolism; lanosterol biosynthesis; lanosterol from farnesyl diphosphate: step 1/3. Functionally, catalyzes the condensation of 2 farnesyl pyrophosphate (FPP) moieties to form squalene. Proceeds in two distinct steps. In the first half-reaction, two molecules of FPP react to form the stable presqualene diphosphate intermediate (PSQPP), with concomitant release of a proton and a molecule of inorganic diphosphate. In the second half-reaction, PSQPP undergoes heterolysis, isomerization, and reduction with NADPH or NADH to form squalene. It is the first committed enzyme of the sterol biosynthesis pathway. In Homo sapiens (Human), this protein is Squalene synthase (FDFT1).